Reading from the N-terminus, the 480-residue chain is Glycogen synthase (480 aa).

ADP-alpha-D-glucose is bound at residue Lys15.

This sequence belongs to the glycosyltransferase 1 family. Bacterial/plant glycogen synthase subfamily.

The catalysed reaction is [(1-&gt;4)-alpha-D-glucosyl](n) + ADP-alpha-D-glucose = [(1-&gt;4)-alpha-D-glucosyl](n+1) + ADP + H(+). It participates in glycan biosynthesis; glycogen biosynthesis. In terms of biological role, synthesizes alpha-1,4-glucan chains using ADP-glucose. The polypeptide is Glycogen synthase (Rhizobium rhizogenes (strain K84 / ATCC BAA-868) (Agrobacterium radiobacter)).